We begin with the raw amino-acid sequence, 1016 residues long: Nonsense-mediated mRNA decay factor SMG5 (1016 aa).

Ser-2 carries the N-acetylserine modification. Residues Ser-2 and Ser-423 each carry the phosphoserine modification. Disordered regions lie at residues 408 to 561 (NPVP…PSEA) and 594 to 637 (PTTN…RSCR). The span at 449–466 (KSRKFSRLSCLRRRRHPP) shows a compositional bias: basic residues. Positions 594 to 603 (PTTNPHTSAS) are enriched in polar residues. Over residues 619–628 (ASEEGSESEG) the composition is skewed to acidic residues. Residues 798–841 (QSEQESLLQQAQAQFRMAQEEARRNRLMRDMAQLRLQLEVSQLE) adopt a coiled-coil conformation. Residues 872-995 (RQLATSGRFI…GPMQAALQAA (124 aa)) form the PINc domain.

As to quaternary structure, interacts with TERT, PPP2CA and SMG1. Part of a complex that contains SMG1, SMG5, SMG7, PPP2CA, a short isoform of UPF3A (isoform UPF3AS, but not isoform UPF3AL) and phosphorylated UPF1. Not detected in complexes that contain unphosphorylated UPF1. As to expression, ubiquitous.

It localises to the cytoplasm. It is found in the nucleus. Its function is as follows. Plays a role in nonsense-mediated mRNA decay. Does not have RNase activity by itself. Promotes dephosphorylation of UPF1. Together with SMG7 is thought to provide a link to the mRNA degradation machinery involving exonucleolytic pathways, and to serve as an adapter for UPF1 to protein phosphatase 2A (PP2A), thereby triggering UPF1 dephosphorylation. Necessary for TERT activity. This Homo sapiens (Human) protein is Nonsense-mediated mRNA decay factor SMG5.